Here is a 282-residue protein sequence, read N- to C-terminus: Putative hydrolase Bmul_3283/BMULJ_05242 (282 aa).

Positions 124, 126, and 155 each coordinate Mg(2+).

Belongs to the FAH family. It depends on Mg(2+) as a cofactor.

The protein is Putative hydrolase Bmul_3283/BMULJ_05242 of Burkholderia multivorans (strain ATCC 17616 / 249).